A 204-amino-acid polypeptide reads, in one-letter code: Tat proofreading chaperone DmsD (204 aa).

The protein belongs to the TorD/DmsD family. DmsD subfamily.

Required for biogenesis/assembly of DMSO reductase, but not for the interaction of the DmsA signal peptide with the Tat system. May be part of a chaperone cascade complex that facilitates a folding-maturation pathway for the substrate protein. In Escherichia coli O6:H1 (strain CFT073 / ATCC 700928 / UPEC), this protein is Tat proofreading chaperone DmsD.